Consider the following 363-residue polypeptide: Ribosomal RNA small subunit methyltransferase H (363 aa).

Residues 55–57, Asp-75, Asp-122, and Gln-129 contribute to the S-adenosyl-L-methionine site; that span reads GGH.

It belongs to the methyltransferase superfamily. RsmH family.

It localises to the cytoplasm. It carries out the reaction cytidine(1402) in 16S rRNA + S-adenosyl-L-methionine = N(4)-methylcytidine(1402) in 16S rRNA + S-adenosyl-L-homocysteine + H(+). Specifically methylates the N4 position of cytidine in position 1402 (C1402) of 16S rRNA. This Bordetella petrii (strain ATCC BAA-461 / DSM 12804 / CCUG 43448) protein is Ribosomal RNA small subunit methyltransferase H.